An 82-amino-acid chain; its full sequence is MIIKEFLTTEKAIKLIESQNTLTVIVNKEATKADIKREIEKMFNVKVDKVNTLITIRGEKKAYVKLKKEFNASDIAHRLGIL.

This sequence belongs to the universal ribosomal protein uL23 family. In terms of assembly, part of the 50S ribosomal subunit. Contacts protein L29.

Its function is as follows. Binds to 23S rRNA. One of the proteins that surrounds the polypeptide exit tunnel on the outside of the ribosome. This chain is Large ribosomal subunit protein uL23, found in Sulfurisphaera tokodaii (strain DSM 16993 / JCM 10545 / NBRC 100140 / 7) (Sulfolobus tokodaii).